We begin with the raw amino-acid sequence, 549 residues long: Glucose-6-phosphate isomerase (549 aa).

Residues K80, K228, and K234 each carry the N6-acetyllysine modification. Catalysis depends on E355, which acts as the Proton donor. Residues H386 and K514 contribute to the active site.

It belongs to the GPI family.

The protein localises to the cytoplasm. The enzyme catalyses alpha-D-glucose 6-phosphate = beta-D-fructose 6-phosphate. It functions in the pathway carbohydrate biosynthesis; gluconeogenesis. Its pathway is carbohydrate degradation; glycolysis; D-glyceraldehyde 3-phosphate and glycerone phosphate from D-glucose: step 2/4. Functionally, catalyzes the reversible isomerization of glucose-6-phosphate to fructose-6-phosphate. The chain is Glucose-6-phosphate isomerase from Escherichia coli (strain SE11).